The sequence spans 306 residues: Ribonuclease Z (306 aa).

His63, His65, Asp67, His68, His141, Asp211, and His269 together coordinate Zn(2+). Asp67 acts as the Proton acceptor in catalysis.

Belongs to the RNase Z family. In terms of assembly, homodimer. The cofactor is Zn(2+).

It carries out the reaction Endonucleolytic cleavage of RNA, removing extra 3' nucleotides from tRNA precursor, generating 3' termini of tRNAs. A 3'-hydroxy group is left at the tRNA terminus and a 5'-phosphoryl group is left at the trailer molecule.. Functionally, zinc phosphodiesterase, which displays some tRNA 3'-processing endonuclease activity. Probably involved in tRNA maturation, by removing a 3'-trailer from precursor tRNA. The chain is Ribonuclease Z from Staphylococcus aureus (strain Mu3 / ATCC 700698).